The sequence spans 498 residues: Heat stress transcription factor A-3 (498 aa).

The tract at residues 156-180 (RRRSSPTQQSGLQPGSSGESGLDPE) is disordered. Residues 160–174 (SPTQQSGLQPGSSGE) are compositionally biased toward polar residues. Residues 180 to 235 (ELNTLRREKSALLQEVTRLKQEHLQTIEQMSTLNQRLESAEDRQKQMVSFLAKLLQ) adopt a coiled-coil conformation. Residues 184 to 234 (LRREKSALLQEVTRLKQEHLQTIEQMSTLNQRLESAEDRQKQMVSFLAKLL) are hydrophobic repeat HR-A/B. The short motif at 258-263 (KRKFLK) is the Nuclear localization signal element. The segment at 263 to 291 (KHVPHGNIDSGESSSQHTGESNLDFSPTS) is disordered. The segment covering 272-291 (SGESSSQHTGESNLDFSPTS) has biased composition (polar residues). A Nuclear export signal motif is present at residues 309-316 (LEDGDLNL). A disordered region spans residues 356-382 (LEIPPASGPRGQDPTIGRSKGKNVLSP).

It belongs to the HSF family. Class A subfamily. Homotrimer. In terms of processing, exhibits temperature-dependent phosphorylation.

The protein localises to the cytoplasm. Its subcellular location is the nucleus. Its function is as follows. Transcriptional regulator that specifically binds DNA of heat shock promoter elements (HSE). The sequence is that of Heat stress transcription factor A-3 (HSFA3) from Oryza sativa subsp. japonica (Rice).